We begin with the raw amino-acid sequence, 360 residues long: Phospho-N-acetylmuramoyl-pentapeptide-transferase (360 aa).

The next 10 helical transmembrane spans lie at 25-45 (RAILSVLTALGISLLLGPWVI), 74-94 (MGGALILSAMFISTLLWSDFG), 97-117 (YVWVVLIVTAIFGAVGWVDDY), 134-154 (YFWQSIAGFGAAVFLFCTAQA), 168-188 (VALNMGLFYIIFTYFVIVGTS), 199-219 (GLAIMPSVMVAGALALIAYLA), 236-256 (AGELAVFCCALVGAGLGFLWF), 263-283 (VFMGDVGALALGAALGLVAVI), 288-308 (FVLFIMGGIFVLETVSVILQV), and 339-359 (IVRFWIITLVLVLIGLATLKF).

Belongs to the glycosyltransferase 4 family. MraY subfamily. Mg(2+) is required as a cofactor.

It localises to the cell inner membrane. The catalysed reaction is UDP-N-acetyl-alpha-D-muramoyl-L-alanyl-gamma-D-glutamyl-meso-2,6-diaminopimeloyl-D-alanyl-D-alanine + di-trans,octa-cis-undecaprenyl phosphate = di-trans,octa-cis-undecaprenyl diphospho-N-acetyl-alpha-D-muramoyl-L-alanyl-D-glutamyl-meso-2,6-diaminopimeloyl-D-alanyl-D-alanine + UMP. It participates in cell wall biogenesis; peptidoglycan biosynthesis. Catalyzes the initial step of the lipid cycle reactions in the biosynthesis of the cell wall peptidoglycan: transfers peptidoglycan precursor phospho-MurNAc-pentapeptide from UDP-MurNAc-pentapeptide onto the lipid carrier undecaprenyl phosphate, yielding undecaprenyl-pyrophosphoryl-MurNAc-pentapeptide, known as lipid I. The polypeptide is Phospho-N-acetylmuramoyl-pentapeptide-transferase (Cellvibrio japonicus (strain Ueda107) (Pseudomonas fluorescens subsp. cellulosa)).